The primary structure comprises 164 residues: Osteocalcin 2b (164 aa).

The signal sequence occupies residues 1–18 (MKSLTLLTICAVLSVSLS). A propeptide spanning residues 19-115 (MNDLALDVVL…LASVLLRRKR (97 aa)) is cleaved from the precursor. Residues 30 to 95 (PDPAAEPAPA…EAMAEDPAAA (66 aa)) are compositionally biased toward low complexity. The disordered stretch occupies residues 30–99 (PDPAAEPAPA…EDPAAATEPE (70 aa)). One can recognise a Gla domain in the interval 128 to 160 (QVESLSEVCELNLACEHMAETAGIVAAYTAYYG). Residues glutamate 130, glutamate 134, and glutamate 137 each coordinate Ca(2+). Glutamate 130, glutamate 134, and glutamate 137 each carry 4-carboxyglutamate. The cysteines at positions 136 and 142 are disulfide-linked.

The protein belongs to the osteocalcin/matrix Gla protein family. Gamma-carboxyglutamate residues are formed by vitamin K dependent carboxylation. These residues are essential for the binding of calcium.

The protein localises to the secreted. Functionally, binds strongly to apatite and calcium. This chain is Osteocalcin 2b, found in Oncorhynchus mykiss (Rainbow trout).